We begin with the raw amino-acid sequence, 132 residues long: Hemoglobin heart muscle subunit alpha-type (132 aa).

The region spanning 1–132 (GLSDSEKSAV…GEVGAILTSS (132 aa)) is the Globin domain. Residues histidine 58 and histidine 83 each contribute to the heme b site.

The protein belongs to the globin family. In terms of assembly, monomer.

In terms of biological role, this hemoglobin may replace myocardial myoglobin in this amphibian species. This chain is Hemoglobin heart muscle subunit alpha-type, found in Aquarana catesbeiana (American bullfrog).